We begin with the raw amino-acid sequence, 693 residues long: Heat shock protein homolog SSE1 (693 aa).

A disordered region spans residues 665 to 693 (LAEKLAAQRKAESEKKESKADAEGDVELD). A compositionally biased stretch (basic and acidic residues) spans 673 to 686 (RKAESEKKESKADA).

This sequence belongs to the heat shock protein 70 family.

It localises to the cytoplasm. This chain is Heat shock protein homolog SSE1 (SSE1), found in Lachancea kluyveri (strain ATCC 58438 / CBS 3082 / BCRC 21498 / NBRC 1685 / JCM 7257 / NCYC 543 / NRRL Y-12651) (Yeast).